A 63-amino-acid chain; its full sequence is Large ribosomal subunit protein bL35 (63 aa).

It belongs to the bacterial ribosomal protein bL35 family.

The chain is Large ribosomal subunit protein bL35 from Campylobacter jejuni subsp. doylei (strain ATCC BAA-1458 / RM4099 / 269.97).